Reading from the N-terminus, the 211-residue chain is Thiamine-phosphate synthase (211 aa).

4-amino-2-methyl-5-(diphosphooxymethyl)pyrimidine-binding positions include 43 to 47 (QLRDK) and Asn75. Asp76 and Asp95 together coordinate Mg(2+). Ser114 serves as a coordination point for 4-amino-2-methyl-5-(diphosphooxymethyl)pyrimidine. Residue 140–142 (TAS) coordinates 2-[(2R,5Z)-2-carboxy-4-methylthiazol-5(2H)-ylidene]ethyl phosphate. Lys143 contributes to the 4-amino-2-methyl-5-(diphosphooxymethyl)pyrimidine binding site. 2-[(2R,5Z)-2-carboxy-4-methylthiazol-5(2H)-ylidene]ethyl phosphate contacts are provided by residues Gly170 and 190-191 (IS).

Belongs to the thiamine-phosphate synthase family. It depends on Mg(2+) as a cofactor.

It catalyses the reaction 2-[(2R,5Z)-2-carboxy-4-methylthiazol-5(2H)-ylidene]ethyl phosphate + 4-amino-2-methyl-5-(diphosphooxymethyl)pyrimidine + 2 H(+) = thiamine phosphate + CO2 + diphosphate. It carries out the reaction 2-(2-carboxy-4-methylthiazol-5-yl)ethyl phosphate + 4-amino-2-methyl-5-(diphosphooxymethyl)pyrimidine + 2 H(+) = thiamine phosphate + CO2 + diphosphate. The catalysed reaction is 4-methyl-5-(2-phosphooxyethyl)-thiazole + 4-amino-2-methyl-5-(diphosphooxymethyl)pyrimidine + H(+) = thiamine phosphate + diphosphate. The protein operates within cofactor biosynthesis; thiamine diphosphate biosynthesis; thiamine phosphate from 4-amino-2-methyl-5-diphosphomethylpyrimidine and 4-methyl-5-(2-phosphoethyl)-thiazole: step 1/1. Functionally, condenses 4-methyl-5-(beta-hydroxyethyl)thiazole monophosphate (THZ-P) and 2-methyl-4-amino-5-hydroxymethyl pyrimidine pyrophosphate (HMP-PP) to form thiamine monophosphate (TMP). This is Thiamine-phosphate synthase from Coprothermobacter proteolyticus (strain ATCC 35245 / DSM 5265 / OCM 4 / BT).